The following is a 327-amino-acid chain: o-succinylbenzoate synthase (327 aa).

Lys110 acts as the Proton donor in catalysis. Asp138, Glu165, and Asp188 together coordinate Mg(2+). The active-site Proton acceptor is the Lys212.

The protein belongs to the mandelate racemase/muconate lactonizing enzyme family. MenC type 1 subfamily. It depends on a divalent metal cation as a cofactor.

It carries out the reaction (1R,6R)-6-hydroxy-2-succinyl-cyclohexa-2,4-diene-1-carboxylate = 2-succinylbenzoate + H2O. It participates in quinol/quinone metabolism; 1,4-dihydroxy-2-naphthoate biosynthesis; 1,4-dihydroxy-2-naphthoate from chorismate: step 4/7. The protein operates within quinol/quinone metabolism; menaquinone biosynthesis. In terms of biological role, converts 2-succinyl-6-hydroxy-2,4-cyclohexadiene-1-carboxylate (SHCHC) to 2-succinylbenzoate (OSB). This chain is o-succinylbenzoate synthase, found in Mycobacterium marinum (strain ATCC BAA-535 / M).